A 505-amino-acid chain; its full sequence is L-arabinose isomerase (505 aa).

Glu308, Glu335, His352, and His453 together coordinate Mn(2+).

Belongs to the arabinose isomerase family. Requires Mn(2+) as cofactor.

It carries out the reaction beta-L-arabinopyranose = L-ribulose. It functions in the pathway carbohydrate degradation; L-arabinose degradation via L-ribulose; D-xylulose 5-phosphate from L-arabinose (bacterial route): step 1/3. Its function is as follows. Catalyzes the conversion of L-arabinose to L-ribulose. The sequence is that of L-arabinose isomerase from Bifidobacterium animalis subsp. lactis (strain AD011).